Here is a 102-residue protein sequence, read N- to C-terminus: Urease subunit beta (102 aa).

It belongs to the urease beta subunit family. Heterotrimer of UreA (gamma), UreB (beta) and UreC (alpha) subunits. Three heterotrimers associate to form the active enzyme.

The protein localises to the cytoplasm. The catalysed reaction is urea + 2 H2O + H(+) = hydrogencarbonate + 2 NH4(+). Its pathway is nitrogen metabolism; urea degradation; CO(2) and NH(3) from urea (urease route): step 1/1. In Alteromonas mediterranea (strain DSM 17117 / CIP 110805 / LMG 28347 / Deep ecotype), this protein is Urease subunit beta.